The primary structure comprises 72 residues: Translation initiation factor IF-1 (72 aa).

An S1-like domain is found at 1–72 (MSKEGKITLK…TRGRIIYRIS (72 aa)).

This sequence belongs to the IF-1 family. In terms of assembly, component of the 30S ribosomal translation pre-initiation complex which assembles on the 30S ribosome in the order IF-2 and IF-3, IF-1 and N-formylmethionyl-tRNA(fMet); mRNA recruitment can occur at any time during PIC assembly.

It localises to the cytoplasm. Its function is as follows. One of the essential components for the initiation of protein synthesis. Stabilizes the binding of IF-2 and IF-3 on the 30S subunit to which N-formylmethionyl-tRNA(fMet) subsequently binds. Helps modulate mRNA selection, yielding the 30S pre-initiation complex (PIC). Upon addition of the 50S ribosomal subunit IF-1, IF-2 and IF-3 are released leaving the mature 70S translation initiation complex. This is Translation initiation factor IF-1 from Malacoplasma penetrans (strain HF-2) (Mycoplasma penetrans).